The primary structure comprises 343 residues: Aspartate carbamoyltransferase catalytic subunit (343 aa).

The carbamoyl phosphate site is built by Arg71 and Thr72. Lys99 lines the L-aspartate pocket. Residues Arg121, His149, and Gln152 each coordinate carbamoyl phosphate. L-aspartate contacts are provided by Arg195 and Arg249. Positions 290 and 291 each coordinate carbamoyl phosphate.

Belongs to the aspartate/ornithine carbamoyltransferase superfamily. ATCase family. As to quaternary structure, heterododecamer (2C3:3R2) of six catalytic PyrB chains organized as two trimers (C3), and six regulatory PyrI chains organized as three dimers (R2).

It carries out the reaction carbamoyl phosphate + L-aspartate = N-carbamoyl-L-aspartate + phosphate + H(+). The protein operates within pyrimidine metabolism; UMP biosynthesis via de novo pathway; (S)-dihydroorotate from bicarbonate: step 2/3. Functionally, catalyzes the condensation of carbamoyl phosphate and aspartate to form carbamoyl aspartate and inorganic phosphate, the committed step in the de novo pyrimidine nucleotide biosynthesis pathway. This Rhodopirellula baltica (strain DSM 10527 / NCIMB 13988 / SH1) protein is Aspartate carbamoyltransferase catalytic subunit.